We begin with the raw amino-acid sequence, 378 residues long: Erythronate-4-phosphate dehydrogenase (378 aa).

The substrate site is built by S45 and T66. Positions 146 and 175 each coordinate NAD(+). R208 is a catalytic residue. D232 provides a ligand contact to NAD(+). E237 is a catalytic residue. The active-site Proton donor is the H254. Position 257 (G257) interacts with NAD(+). Y258 lines the substrate pocket.

It belongs to the D-isomer specific 2-hydroxyacid dehydrogenase family. PdxB subfamily. Homodimer.

Its subcellular location is the cytoplasm. The catalysed reaction is 4-phospho-D-erythronate + NAD(+) = (R)-3-hydroxy-2-oxo-4-phosphooxybutanoate + NADH + H(+). The protein operates within cofactor biosynthesis; pyridoxine 5'-phosphate biosynthesis; pyridoxine 5'-phosphate from D-erythrose 4-phosphate: step 2/5. Catalyzes the oxidation of erythronate-4-phosphate to 3-hydroxy-2-oxo-4-phosphonooxybutanoate. The polypeptide is Erythronate-4-phosphate dehydrogenase (Escherichia fergusonii (strain ATCC 35469 / DSM 13698 / CCUG 18766 / IAM 14443 / JCM 21226 / LMG 7866 / NBRC 102419 / NCTC 12128 / CDC 0568-73)).